The sequence spans 184 residues: Putative F-box protein At4g22420 (184 aa).

The region spanning 1–46 is the F-box domain; the sequence is MAECPTDLINEMFLRLRATTLKKCRVLSKPCFSLIDSPEKRVIERS. Positions 68–126 are disordered; the sequence is DDDEEEGNELKKSQARRNGVAKGEGNGNKVNGEAQEEVDDEEDDDDDASKGRGKHSRHV. Over residues 85–100 the composition is skewed to low complexity; sequence NGVAKGEGNGNKVNGE. Over residues 101-114 the composition is skewed to acidic residues; that stretch reads AQEEVDDEEDDDDD.

This chain is Putative F-box protein At4g22420, found in Arabidopsis thaliana (Mouse-ear cress).